The chain runs to 120 residues: U-scoloptoxin(20)-Cw1a (120 aa).

An N-terminal signal peptide occupies residues 1 to 26 (MNSTDRLLGVLLAVVALILLIRISEA). Residues 87-106 (SSGKSLTTTKDSSESRKKEI) form a disordered region. The segment covering 97–106 (DSSESRKKEI) has biased composition (basic and acidic residues).

It belongs to the scoloptoxin-20 family. Contains 3 disulfide bonds. In terms of tissue distribution, expressed by the venom gland.

The protein localises to the secreted. This Cormocephalus westwoodi (Westwood's green centipede) protein is U-scoloptoxin(20)-Cw1a.